A 1954-amino-acid chain; its full sequence is Protein abnormal spindle (1954 aa).

The interval 134–155 (VKNPRKFPTVGKTLQLKSPTGA) is disordered. Residues S151 and S360 each carry the phosphoserine modification. T364 is subject to Phosphothreonine. S388, S390, S395, S398, S491, S495, S497, S501, S504, and S514 each carry phosphoserine. A disordered region spans residues 476–548 (KSVKGSPVKN…SSSAHAWPHA (73 aa)). The segment covering 498 to 507 (DAPSNESLYR) has biased composition (polar residues). Low complexity predominate over residues 528 to 548 (RSAAPANASARSSSAHAWPHA). The region spanning 836–968 (KETKDILLRF…LLWQLIYKFR (133 aa)) is the Calponin-homology (CH) domain. 3 IQ domains span residues 1004–1033 (RHRA…ERTQ), 1386–1415 (TQAA…QLRQ), and 1467–1496 (QREA…KQRQ). The stretch at 1614–1641 (RANRSMKQARQEFVQLRTIAVHLQQKFR) forms a coiled coil. IQ domains lie at 1656-1687 (LRCS…MMDL) and 1690-1721 (QKRA…IRKR).

It is found in the cytoplasm. Its subcellular location is the nucleus. The protein localises to the cytoskeleton. The protein resides in the spindle. It localises to the microtubule organizing center. It is found in the perinuclear region. In terms of biological role, required to maintain the structure of the centrosomal microtubule organizing center (MTOC) during mitosis. May have a preferential role in regulating neurogenesis. Required for germ cell mitosis and oocyte differentiation. The polypeptide is Protein abnormal spindle (Drosophila melanogaster (Fruit fly)).